We begin with the raw amino-acid sequence, 258 residues long: Tryptophan synthase alpha chain (258 aa).

Active-site proton acceptor residues include E47 and D58.

It belongs to the TrpA family. In terms of assembly, tetramer of two alpha and two beta chains.

The catalysed reaction is (1S,2R)-1-C-(indol-3-yl)glycerol 3-phosphate + L-serine = D-glyceraldehyde 3-phosphate + L-tryptophan + H2O. The protein operates within amino-acid biosynthesis; L-tryptophan biosynthesis; L-tryptophan from chorismate: step 5/5. The alpha subunit is responsible for the aldol cleavage of indoleglycerol phosphate to indole and glyceraldehyde 3-phosphate. This is Tryptophan synthase alpha chain from Bacillus thuringiensis subsp. konkukian (strain 97-27).